The following is a 342-amino-acid chain: S-adenosylmethionine:tRNA ribosyltransferase-isomerase (342 aa).

The protein belongs to the QueA family. Monomer.

Its subcellular location is the cytoplasm. The catalysed reaction is 7-aminomethyl-7-carbaguanosine(34) in tRNA + S-adenosyl-L-methionine = epoxyqueuosine(34) in tRNA + adenine + L-methionine + 2 H(+). It functions in the pathway tRNA modification; tRNA-queuosine biosynthesis. Transfers and isomerizes the ribose moiety from AdoMet to the 7-aminomethyl group of 7-deazaguanine (preQ1-tRNA) to give epoxyqueuosine (oQ-tRNA). The polypeptide is S-adenosylmethionine:tRNA ribosyltransferase-isomerase (Listeria welshimeri serovar 6b (strain ATCC 35897 / DSM 20650 / CCUG 15529 / CIP 8149 / NCTC 11857 / SLCC 5334 / V8)).